A 251-amino-acid polypeptide reads, in one-letter code: Transmembrane ascorbate-dependent reductase CYB561 (251 aa).

Position 1 is an N-acetylmethionine (methionine 1). The Cytoplasmic segment spans residues 1–16 (MEGGAAASTPAALPYY). A helical membrane pass occupies residues 17 to 37 (VAFSQLLGLTLVAMTGAWLGL). In terms of domain architecture, Cytochrome b561 spans 19–220 (FSQLLGLTLV…FGGAVLYILT (202 aa)). Residues 38–51 (YRGGIAWESDLQFN) are Vesicular-facing. A helical membrane pass occupies residues 52-72 (AHPLCMVIGLIFLQGDALLVY). 3 residues coordinate heme b: histidine 53, arginine 73, and lysine 80. Topologically, residues 73–85 (RVFRNEAKRTTKV) are cytoplasmic. 2 residues coordinate L-ascorbate: lysine 80 and lysine 84. Residues 86-106 (LHGLLHIFALVIALVGLVAVF) form a helical membrane-spanning segment. Residues histidine 87, 116-119 (DLYS), and histidine 121 contribute to the heme b site. Residues 107–124 (DYHRKEGYADLYSLHSWC) are Vesicular-facing. A helical membrane pass occupies residues 125–145 (GILVFVLYFVQWLVGFSFFLF). Topologically, residues 146 to 158 (PGASFSLRSRYRP) are cytoplasmic. Arginine 153 is an L-ascorbate binding site. A helical transmembrane segment spans residues 159–179 (QHIFFGATIFLLSVGTALLGL). The heme b site is built by histidine 160 and glutamate 181. Residues 180–198 (KEALLFKLRDKYSAFEPEG) lie on the Vesicular side of the membrane. A helical membrane pass occupies residues 199-219 (VLANVLGLLLACFGGAVLYIL). The Cytoplasmic segment spans residues 220–251 (TRADWKRPSQAEEQALSMDFKTLTEGDSPGSQ). Lysine 225 provides a ligand contact to heme b. Position 247 is a phosphoserine (serine 247).

Heme b serves as cofactor.

The protein resides in the cytoplasmic vesicle. The protein localises to the secretory vesicle. It localises to the chromaffin granule membrane. It catalyses the reaction monodehydro-L-ascorbate radical(out) + L-ascorbate(in) = monodehydro-L-ascorbate radical(in) + L-ascorbate(out). Functionally, transmembrane reductase that uses ascorbate as an electron donor in the cytoplasm and transfers electrons across membranes to reduce monodehydro-L-ascorbate radical in the lumen of secretory vesicles. It is therefore involved the regeneration and homeostasis within secretory vesicles of ascorbate which in turn provides reducing equivalents needed to support the activity of intravesicular enzymes. This Pongo abelii (Sumatran orangutan) protein is Transmembrane ascorbate-dependent reductase CYB561 (CYB561).